The sequence spans 254 residues: uncharacterized protein (254 aa).

NADP(+)-binding residues include V7 and N85. S136 functions as the Proton donor in the catalytic mechanism. NADP(+)-binding residues include Y150, K154, V181, and T183. The active-site Proton acceptor is the Y150. K154 acts as the Lowers pKa of active site Tyr in catalysis.

Belongs to the short-chain dehydrogenases/reductases (SDR) family.

This is an uncharacterized protein from Saccharomyces cerevisiae (strain ATCC 204508 / S288c) (Baker's yeast).